Consider the following 397-residue polypeptide: Probable protein phosphatase 2C 74 (397 aa).

Residues 133 to 391 enclose the PPM-type phosphatase domain; that stretch reads GFWVASRRGL…DDVTVMVVDL (259 aa). Mn(2+) contacts are provided by D170, G171, D343, and D382.

It belongs to the PP2C family. Mg(2+) serves as cofactor. It depends on Mn(2+) as a cofactor.

It carries out the reaction O-phospho-L-seryl-[protein] + H2O = L-seryl-[protein] + phosphate. The catalysed reaction is O-phospho-L-threonyl-[protein] + H2O = L-threonyl-[protein] + phosphate. This is Probable protein phosphatase 2C 74 from Oryza sativa subsp. japonica (Rice).